Consider the following 117-residue polypeptide: Probable non-functional immunoglobulinn kappa variable 1-37 (117 aa).

The first 22 residues, 1 to 22 (MDMRVPAQLLGLLLLWVPGARC), serve as a signal peptide directing secretion. One can recognise an Ig-like domain in the interval 24-117 (IQLTQSPSSL…YYGQRTYNAP (94 aa)).

As to quaternary structure, most probably, the immunoglobulin is not assembled due to incorrect folding of light chain. Immunoglobulins are composed of two identical heavy chains and two identical light chains; disulfide-linked.

It is found in the secreted. The protein localises to the cell membrane. In terms of biological role, probable non-functional open reading frame (ORF) of V region of the variable domain of immunoglobulin light chains. Non-functional ORF generally cannot participate in the synthesis of a productive immunoglobulin chain due to altered V-(D)-J or switch recombination and/or splicing site (at mRNA level) and/or conserved amino acid change (protein level). Immunoglobulins, also known as antibodies, are membrane-bound or secreted glycoproteins produced by B lymphocytes. In the recognition phase of humoral immunity, the membrane-bound immunoglobulins serve as receptors which, upon binding of a specific antigen, trigger the clonal expansion and differentiation of B lymphocytes into immunoglobulins-secreting plasma cells. Secreted immunoglobulins mediate the effector phase of humoral immunity, which results in the elimination of bound antigens. The antigen binding site is formed by the variable domain of one heavy chain, together with that of its associated light chain. Thus, each immunoglobulin has two antigen binding sites with remarkable affinity for a particular antigen. The variable domains are assembled by a process called V-(D)-J rearrangement and can then be subjected to somatic hypermutations which, after exposure to antigen and selection, allow affinity maturation for a particular antigen. This Homo sapiens (Human) protein is Probable non-functional immunoglobulinn kappa variable 1-37.